Consider the following 77-residue polypeptide: U8-lycotoxin-Ls1j (77 aa).

Positions 1–20 (MKLIIFTGLILFAIVSLIEA) are cleaved as a signal peptide. A propeptide spanning residues 21–26 (QANNEK) is cleaved from the precursor.

It belongs to the neurotoxin 19 (CSTX) family. 08 (U8-Lctx) subfamily. Contains 4 disulfide bonds. In terms of tissue distribution, expressed by the venom gland.

It localises to the secreted. The protein is U8-lycotoxin-Ls1j of Lycosa singoriensis (Wolf spider).